The following is a 168-amino-acid chain: Photosystem I assembly protein Ycf3 (168 aa).

TPR repeat units lie at residues 29–62 (AFSYYRAGMSAQSKGRYAEALQNYYEALQVEEDP), 66–99 (SYTLYNIGLIYGNTGKYTQALEFYHQALSLNANL), and 117–150 (AQSLEEDEYIELSKELFDKAAEYWIQALKLAPDN).

It belongs to the Ycf3 family.

The protein resides in the plastid. It is found in the chloroplast thylakoid membrane. In terms of biological role, essential for the assembly of the photosystem I (PSI) complex. May act as a chaperone-like factor to guide the assembly of the PSI subunits. The polypeptide is Photosystem I assembly protein Ycf3 (Phaeodactylum tricornutum (strain CCAP 1055/1)).